Consider the following 189-residue polypeptide: Probable nicotinate-nucleotide adenylyltransferase (189 aa).

It belongs to the NadD family.

It catalyses the reaction nicotinate beta-D-ribonucleotide + ATP + H(+) = deamido-NAD(+) + diphosphate. It participates in cofactor biosynthesis; NAD(+) biosynthesis; deamido-NAD(+) from nicotinate D-ribonucleotide: step 1/1. In terms of biological role, catalyzes the reversible adenylation of nicotinate mononucleotide (NaMN) to nicotinic acid adenine dinucleotide (NaAD). The sequence is that of Probable nicotinate-nucleotide adenylyltransferase from Bacillus cereus (strain B4264).